Here is a 40-residue protein sequence, read N- to C-terminus: uncharacterized protein (40 aa).

This is an uncharacterized protein from Streptomyces peucetius.